The sequence spans 551 residues: Rqc2 homolog RqcH (551 aa).

This sequence belongs to the NEMF family. Associates with stalled 50S ribosomal subunits, binds to RqcP. Interacts with human fibronectin.

It localises to the secreted. The protein localises to the capsule. Its subcellular location is the cell surface. The protein resides in the cytoplasm. Key component of the ribosome quality control system (RQC), a ribosome-associated complex that mediates the extraction of incompletely synthesized nascent chains from stalled ribosomes and their subsequent degradation. RqcH recruits Ala-charged tRNA, and with RqcP directs the elongation of stalled nascent chains on 50S ribosomal subunits, leading to non-templated C-terminal alanine extensions (Ala tail). The Ala tail promotes nascent chain degradation. May add between 1 and at least 8 Ala residues. Binds to stalled 50S ribosomal subunits. Its function is as follows. Plays a significant role in virulence. Recombinant protein binds to immobilized human fibronectin; binding is saturable and competed by heparin. Purified protein inhibits binding of whole cells to fibronectin. The sequence is that of Rqc2 homolog RqcH from Streptococcus pneumoniae serotype 2 (strain D39 / NCTC 7466).